We begin with the raw amino-acid sequence, 441 residues long: Hydroxycinnamoyl-CoA:5-hydroxyanthranilate N-hydroxycinnamoyltransferase HHT1 (441 aa).

Residues H158 and D388 each act as proton acceptor in the active site.

Belongs to the plant acyltransferase family.

The catalysed reaction is 5-hydroxyanthranilate + (E)-4-coumaroyl-CoA = avenanthramide A + CoA. It catalyses the reaction 5-hydroxyanthranilate + (E)-caffeoyl-CoA = avenanthramide C + CoA. Involved in the biosynthesis of avenanthramide phytoalexins, which are phenolic alkaloids found mainly in oats. Catalyzes the N-acylation of 5-hydroxyanthranilate with 4-coumaroyl-CoA or caffeoyl-CoA as acyl donors, forming avenanthramide A and avenanthramide C, respectively. Does not accept feruloyl-CoA as a substrate. The sequence is that of Hydroxycinnamoyl-CoA:5-hydroxyanthranilate N-hydroxycinnamoyltransferase HHT1 from Avena sativa (Oat).